The chain runs to 718 residues: Ribosomal RNA large subunit methyltransferase K/L (718 aa).

The region spanning 43–154 (TQYRILLWSR…QDELVVSLDL (112 aa)) is the THUMP domain.

This sequence belongs to the methyltransferase superfamily. RlmKL family.

It localises to the cytoplasm. The enzyme catalyses guanosine(2445) in 23S rRNA + S-adenosyl-L-methionine = N(2)-methylguanosine(2445) in 23S rRNA + S-adenosyl-L-homocysteine + H(+). It catalyses the reaction guanosine(2069) in 23S rRNA + S-adenosyl-L-methionine = N(2)-methylguanosine(2069) in 23S rRNA + S-adenosyl-L-homocysteine + H(+). Functionally, specifically methylates the guanine in position 2445 (m2G2445) and the guanine in position 2069 (m7G2069) of 23S rRNA. The polypeptide is Ribosomal RNA large subunit methyltransferase K/L (Histophilus somni (strain 2336) (Haemophilus somnus)).